We begin with the raw amino-acid sequence, 317 residues long: Beta-ketoacyl-[acyl-carrier-protein] synthase III (317 aa).

Catalysis depends on residues C112 and H244. An ACP-binding region spans residues 245–249 (QANIR). The active site involves N274.

It belongs to the thiolase-like superfamily. FabH family. As to quaternary structure, homodimer.

It is found in the cytoplasm. It catalyses the reaction malonyl-[ACP] + acetyl-CoA + H(+) = 3-oxobutanoyl-[ACP] + CO2 + CoA. Its pathway is lipid metabolism; fatty acid biosynthesis. In terms of biological role, catalyzes the condensation reaction of fatty acid synthesis by the addition to an acyl acceptor of two carbons from malonyl-ACP. Catalyzes the first condensation reaction which initiates fatty acid synthesis and may therefore play a role in governing the total rate of fatty acid production. Possesses both acetoacetyl-ACP synthase and acetyl transacylase activities. Its substrate specificity determines the biosynthesis of branched-chain and/or straight-chain of fatty acids. The chain is Beta-ketoacyl-[acyl-carrier-protein] synthase III from Rickettsia akari (strain Hartford).